A 204-amino-acid polypeptide reads, in one-letter code: Prephenate decarboxylase (204 aa).

It belongs to the prephenate decarboxylase family.

The protein localises to the cytoplasm. The enzyme catalyses prephenate + H(+) = 3-[(4R)-4-hydroxycyclohexa-1,5-dien-1-yl]-2-oxopropanoate + CO2. The protein operates within antibiotic biosynthesis; bacilysin biosynthesis. Part of the bacABCDEF operon responsible for the biosynthesis of the nonribosomally synthesized dipeptide antibiotic bacilysin, composed of L-alanine and L-anticapsin. Bacilysin is an irreversible inactivator of the glutaminase domain of glucosamine synthetase. BacA is an unusual prephenate decarboxylase that avoids the typical aromatization of the cyclohexadienol ring of prephenate. BacA catalyzes the protonation of prephenate (1-carboxy-4-hydroxy-alpha-oxo-2,5-cyclohexadiene-1-propanoic acid) at C6 position, followed by a decarboxylation to produce the endocyclic-delta(4),delta(8)-7R-dihydro-hydroxyphenylpyruvate (en-H2HPP). En-H2HPP is able to undergo a slow nonenzymatic isomerization to produce the exocyclic-delta(3),delta(5)-dihydro-hydroxyphenylpyruvate (ex-H2HPP). BacA isomerizes only the pro-R double bond in prephenate. The polypeptide is Prephenate decarboxylase (Bacillus subtilis).